The following is a 226-amino-acid chain: Large ribosomal subunit protein uL1 (226 aa).

It belongs to the universal ribosomal protein uL1 family. In terms of assembly, part of the 50S ribosomal subunit.

Functionally, binds directly to 23S rRNA. The L1 stalk is quite mobile in the ribosome, and is involved in E site tRNA release. Its function is as follows. Protein L1 is also a translational repressor protein, it controls the translation of the L11 operon by binding to its mRNA. The polypeptide is Large ribosomal subunit protein uL1 (Mycoplasma mycoides subsp. mycoides SC (strain CCUG 32753 / NCTC 10114 / PG1)).